The following is a 262-amino-acid chain: LysM domain-containing protein ARB_03438 (262 aa).

The first 22 residues, 1–22 (MVSIPLILGAIILLGTRKAATA), serve as a signal peptide directing secretion. Residues 31-75 (FAVTAATDDTCQSLGAQWGIGMAQFLKWNPGVNCNALVAGKTYCL) enclose the LysM 1 domain. A disordered region spans residues 85–112 (TASLTPSPQVPTTSRATQTMTSKASTGT). Positions 86–112 (ASLTPSPQVPTTSRATQTMTSKASTGT) are enriched in polar residues. The LysM 2 domain occupies 132–179 (FYHPVSPGDTCQSIVDRYKAFTLDQFYTWNPSVGKNCESLWLGYYVCT). The interval 184–240 (GPNSPSQQPPSQQPPSQQSPSQQSPSQQSPSQQPPSQQPPSQQPPSQQSNTSQQTQP) is disordered. The span at 197–214 (PPSQQSPSQQSPSQQSPS) shows a compositional bias: low complexity. Pro residues predominate over residues 215-226 (QQPPSQQPPSQQ). Residues 227-240 (PPSQQSNTSQQTQP) are compositionally biased toward low complexity. Residue asparagine 233 is glycosylated (N-linked (GlcNAc...) asparagine).

It is found in the secreted. Its function is as follows. Might have a role in sequestration of chitin oligosaccharides (breakdown products of fungal cell walls that are released during invasion and act as triggers of host immunity) to dampen host defense. This chain is LysM domain-containing protein ARB_03438, found in Arthroderma benhamiae (strain ATCC MYA-4681 / CBS 112371) (Trichophyton mentagrophytes).